The sequence spans 272 residues: Shikimate dehydrogenase (NADP(+)) (272 aa).

Shikimate contacts are provided by residues 14-16 (SKS) and T61. K65 functions as the Proton acceptor in the catalytic mechanism. E77 provides a ligand contact to NADP(+). Positions 86 and 102 each coordinate shikimate. NADP(+) is bound by residues 126–130 (GAGGA), 149–154 (NRTASR), and M213. Y215 serves as a coordination point for shikimate. G237 is a binding site for NADP(+).

This sequence belongs to the shikimate dehydrogenase family. Homodimer.

The catalysed reaction is shikimate + NADP(+) = 3-dehydroshikimate + NADPH + H(+). It functions in the pathway metabolic intermediate biosynthesis; chorismate biosynthesis; chorismate from D-erythrose 4-phosphate and phosphoenolpyruvate: step 4/7. Its function is as follows. Involved in the biosynthesis of the chorismate, which leads to the biosynthesis of aromatic amino acids. Catalyzes the reversible NADPH linked reduction of 3-dehydroshikimate (DHSA) to yield shikimate (SA). This is Shikimate dehydrogenase (NADP(+)) from Citrobacter koseri (strain ATCC BAA-895 / CDC 4225-83 / SGSC4696).